We begin with the raw amino-acid sequence, 119 residues long: Large ribosomal subunit protein bL20 (119 aa).

Belongs to the bacterial ribosomal protein bL20 family.

Functionally, binds directly to 23S ribosomal RNA and is necessary for the in vitro assembly process of the 50S ribosomal subunit. It is not involved in the protein synthesizing functions of that subunit. The protein is Large ribosomal subunit protein bL20 of Caldicellulosiruptor bescii (strain ATCC BAA-1888 / DSM 6725 / KCTC 15123 / Z-1320) (Anaerocellum thermophilum).